A 322-amino-acid chain; its full sequence is (12E)-labda-8(17),12,14-triene synthase (322 aa).

Over residues 1 to 11 (MNDATRTSTTP) the composition is skewed to polar residues. The tract at residues 1–26 (MNDATRTSTTPPALPMPDLRDSFPGP) is disordered. Mg(2+) contacts are provided by D93 and E98. Residues 93–98 (DDAHGE) carry the DDXXXE motif motif. Position 188 (R188) interacts with substrate. Residues N234 and S238 each coordinate Mg(2+). The short motif at 234-242 (NDLASYAKE) is the NXXXSXXXE motif element. K241 serves as a coordination point for substrate. E242 lines the Mg(2+) pocket. 319–320 (RY) contacts substrate.

It belongs to the terpene synthase family. Mg(2+) serves as cofactor.

The enzyme catalyses (+)-copalyl diphosphate = (12E)-labda-8(17),12,14-triene + diphosphate. Its function is as follows. Involved in the biosynthesis of the labdane-type bicyclic diterpene labda-8(17),12(E),14-triene. Catalyzes the conversion of (+)-copalyl diphosphate to yield labda-8(17),12(E),14-triene. The chain is (12E)-labda-8(17),12,14-triene synthase from Streptomyces anulatus (Streptomyces chrysomallus).